A 466-amino-acid polypeptide reads, in one-letter code: MSGPVDLRALPSVDQMLNAAAVSPLVEQHGRAVVTDELRKVLGEVRLAVRSGGALPGKDGIVAALLSRLDDRSRSNLRPLFNLTGTVLHTNLGRALLAQEAVDAAVDAMREAAALEFDLDSGGRGERDSHLRELLCELTGAEDATVVNNNAAAVLIALNSVGAGRQAIVSRGELIEIGGAFRMPDIMERAGVDLVEVGTTNRTHAKDYVKAIGPETALILKVHTSNYRIEGFTAEVPGAELAAIAHERGVVLLNDLGSGSLVDLSRYGLGREPTVREAVAEGADLVTFSGDKLLGGPQAGFIVGRRDLIAEINRNPLKRALRVDKIRIAATAATLKLYRDPDRLASRLPTLFMLSRVQAEVRAQAERLAPQVGAMLAPSGYAVEVCSCSSQIGSGALPVDTIPSAGLRIVGSSGSALEALAALFRSLSRPILGRLRDGALVLDLRCLSDEAEFLKTLSEGSGDAVA.

Position 292 is an N6-(pyridoxal phosphate)lysine (Lys-292).

The protein belongs to the SelA family. Pyridoxal 5'-phosphate serves as cofactor.

The protein resides in the cytoplasm. It catalyses the reaction L-seryl-tRNA(Sec) + selenophosphate + H(+) = L-selenocysteinyl-tRNA(Sec) + phosphate. Its pathway is aminoacyl-tRNA biosynthesis; selenocysteinyl-tRNA(Sec) biosynthesis; selenocysteinyl-tRNA(Sec) from L-seryl-tRNA(Sec) (bacterial route): step 1/1. Its function is as follows. Converts seryl-tRNA(Sec) to selenocysteinyl-tRNA(Sec) required for selenoprotein biosynthesis. The polypeptide is L-seryl-tRNA(Sec) selenium transferase (Rhizobium meliloti (strain 1021) (Ensifer meliloti)).